A 917-amino-acid polypeptide reads, in one-letter code: Coiled-coil domain-containing protein 186 (917 aa).

Disordered regions lie at residues 1 to 52, 97 to 118, and 701 to 769; these read MKIR…SGDE, SCAN…PGGD, and TQRR…SVAV. Over residues 33–44 the composition is skewed to basic and acidic residues; the sequence is TTEKTSELRDDS. Residues 220-736 adopt a coiled-coil conformation; it reads RYLQQELTVK…TENGNHDKDI (517 aa). Residues 722–736 show a composition bias toward basic and acidic residues; sequence RKLEQTENGNHDKDI. Residues 737–748 show a composition bias toward low complexity; sequence SSMGSRSSSSGS. The residue at position 759 (Ser-759) is a Phosphoserine. Coiled-coil stretches lie at residues 778–822 and 874–913; these read AMLI…IQSY and KLQA…LEQR.

In terms of tissue distribution, expressed in postnatal germ cells.

This is Coiled-coil domain-containing protein 186 (Ccdc186) from Mus musculus (Mouse).